The sequence spans 402 residues: Endo-polygalacturonase (402 aa).

Positions 1–23 (MEYQSGKRVLSLSLGLIGLFSAS) are cleaved as a signal peptide. Disulfide bonds link Cys41–Cys62 and Cys115–Cys125. Asp249 functions as the Proton donor in the catalytic mechanism. The active site involves His277.

It belongs to the glycosyl hydrolase 28 family. Monomer.

Its subcellular location is the secreted. The enzyme catalyses (1,4-alpha-D-galacturonosyl)n+m + H2O = (1,4-alpha-D-galacturonosyl)n + (1,4-alpha-D-galacturonosyl)m.. Functionally, involved in maceration and soft-rotting of plant tissue. The polypeptide is Endo-polygalacturonase (pehA) (Pectobacterium parmentieri).